The following is a 305-amino-acid chain: 4-hydroxy-tetrahydrodipicolinate synthase 1 (305 aa).

Threonine 53 contacts pyruvate. The Proton donor/acceptor role is filled by tyrosine 141. Catalysis depends on lysine 169, which acts as the Schiff-base intermediate with substrate. A pyruvate-binding site is contributed by valine 209.

Belongs to the DapA family. In terms of assembly, homotetramer; dimer of dimers.

Its subcellular location is the cytoplasm. The catalysed reaction is L-aspartate 4-semialdehyde + pyruvate = (2S,4S)-4-hydroxy-2,3,4,5-tetrahydrodipicolinate + H2O + H(+). The protein operates within amino-acid biosynthesis; L-lysine biosynthesis via DAP pathway; (S)-tetrahydrodipicolinate from L-aspartate: step 3/4. Functionally, catalyzes the condensation of (S)-aspartate-beta-semialdehyde [(S)-ASA] and pyruvate to 4-hydroxy-tetrahydrodipicolinate (HTPA). The protein is 4-hydroxy-tetrahydrodipicolinate synthase 1 of Streptomyces coelicolor (strain ATCC BAA-471 / A3(2) / M145).